A 307-amino-acid polypeptide reads, in one-letter code: 17-beta-hydroxysteroid dehydrogenase type 3 (307 aa).

The helical transmembrane segment at 6–26 (IIFVLTGTCAILVFGGKIASL) threads the bilayer. 47 to 76 (GKWAVITGGSDGIGRAYAEELSKQGMSVII) serves as a coordination point for NADP(+). A substrate-binding site is contributed by S187. Residue Y200 is the Proton acceptor of the active site.

The protein belongs to the short-chain dehydrogenases/reductases (SDR) family. In terms of tissue distribution, expression shows strong sexual dimorphism. In female, highly expressed in ovaries, and at lower levels in skin muscle, eyes and liver. In males, strongly expressed in liver and at lower levels in testis, spleen, kidney, intestine and muscle.

Its subcellular location is the endoplasmic reticulum. It localises to the membrane. The enzyme catalyses a 17beta-hydroxy steroid + NADP(+) = a 17-oxo steroid + NADPH + H(+). It carries out the reaction testosterone + NADP(+) = androst-4-ene-3,17-dione + NADPH + H(+). The catalysed reaction is 3beta-hydroxyandrost-5-en-17-one + NADPH + H(+) = androst-5-en-3beta,17beta-diol + NADP(+). It catalyses the reaction 3beta-hydroxy-5alpha-androstan-17-one + NADPH + H(+) = 5alpha-androstane-3beta,17beta-diol + NADP(+). The enzyme catalyses androst-4-ene-3,11,17-trione + NADPH + H(+) = 17beta-hydroxyandrost-4-ene-3,11-dione + NADP(+). It carries out the reaction 11beta-hydroxyandrost-4-ene-3,17-dione + NADPH + H(+) = 11beta,17beta-dihydroxyandrost-4-ene-3-one + NADP(+). It participates in hormone biosynthesis; testosterone biosynthesis. It functions in the pathway steroid metabolism. Catalyzes the conversion of 17-oxosteroids to 17beta-hydroxysteroids in the presence of NADPH. Favors the reduction of androstenedione to testosterone. Testosterone is the key androgen driving male development and function. Among further tested androgens epiandrosterone and dehydroepiandrosterone are accepted as substrates and reduced at C-17. Can also reduce 11-ketoandrostenedione as well as 11beta-hydroxyandrostenedione at C-17 to the respective testosterone forms. Cannot use androsterone and androstanedione as substrates. This chain is 17-beta-hydroxysteroid dehydrogenase type 3 (hsd17b3), found in Danio rerio (Zebrafish).